Reading from the N-terminus, the 359-residue chain is Maleylacetate reductase 2 (359 aa).

This sequence belongs to the iron-containing alcohol dehydrogenase family. Homodimer.

It carries out the reaction 3-oxoadipate + NAD(+) = maleylacetate + NADH + H(+). The catalysed reaction is 3-oxoadipate + NADP(+) = maleylacetate + NADPH + H(+). It functions in the pathway aromatic compound metabolism; 3-chlorocatechol degradation. Its activity is regulated as follows. Inhibited by p-chloromercuribenzoate and by 3-oxoadipate, and, in a temperature-dependent manner, by manganese. In terms of biological role, plays a major role in the degradation of chloroaromatic compounds by channeling maleylacetate and some of its substituted derivatives into the 3-oxoadipate pathway. This enzyme converts maleylacetate and 2-chloromaleylacetate with similar efficiencies. NADH is preferred to NADPH as the cosubstrate. The protein is Maleylacetate reductase 2 (tfdFII) of Cupriavidus pinatubonensis (strain JMP 134 / LMG 1197) (Cupriavidus necator (strain JMP 134)).